We begin with the raw amino-acid sequence, 429 residues long: Probable M18 family aminopeptidase 2 (429 aa).

Positions 82, 156, and 401 each coordinate Zn(2+).

It belongs to the peptidase M18 family. Requires Zn(2+) as cofactor.

The polypeptide is Probable M18 family aminopeptidase 2 (Pseudomonas putida (strain ATCC 47054 / DSM 6125 / CFBP 8728 / NCIMB 11950 / KT2440)).